We begin with the raw amino-acid sequence, 351 residues long: MMESSTILQRRALFNEAGDIELHKRRMVGGNTTNLNDFNNMKYPWVSKWYRQAMNNFWIPEEINMSSDVQDYRNLSAIEKTAYDKILSFLIFLDSIQTANLPNIGQYITANEINLCLTIQAFQEAVHSQSYSYMLDTICSPEERNDILYQWKDDEHLLARNKFIGNLYNEFQDDKSVLALLKVAIANYVLEGIYFYSGFMFFYNLGRNNKMPGSVQEIRYINRDENTHLWLFRSIIQELQKEEPQVFTARNVRLFRDMIREGCEQEIKWGDYVIGDQIPGLNRHMVADYIRYLGNLRCENLGFEPLYEGHRVEPESMSWVSQYSNANLIKTDFFEAKSTAYAKSSAMVDDL.

Fe cation contacts are provided by aspartate 94, glutamate 124, and histidine 127. Tyrosine 131 is a catalytic residue. Fe cation is bound by residues glutamate 191, glutamate 225, and histidine 228.

It belongs to the ribonucleoside diphosphate reductase small chain family. Tetramer of two alpha and two beta subunits. Requires Fe cation as cofactor.

It catalyses the reaction a 2'-deoxyribonucleoside 5'-diphosphate + [thioredoxin]-disulfide + H2O = a ribonucleoside 5'-diphosphate + [thioredoxin]-dithiol. Provides the precursors necessary for DNA synthesis. Catalyzes the biosynthesis of deoxyribonucleotides from the corresponding ribonucleotides. The polypeptide is Ribonucleoside-diphosphate reductase subunit beta (nrdB) (Treponema pallidum (strain Nichols)).